Reading from the N-terminus, the 509-residue chain is GMP synthase [glutamine-hydrolyzing] (509 aa).

Residues 4–193 (NVLILDFGSQ…LVKIAQVPQN (190 aa)) enclose the Glutamine amidotransferase type-1 domain. C79 (nucleophile) is an active-site residue. Catalysis depends on residues H167 and E169. The region spanning 194 to 384 (FTPNAFVSDM…LGIDAELLGR (191 aa)) is the GMPS ATP-PPase domain. ATP is bound at residue 221 to 227 (SGGVDST).

As to quaternary structure, homodimer.

It catalyses the reaction XMP + L-glutamine + ATP + H2O = GMP + L-glutamate + AMP + diphosphate + 2 H(+). Its pathway is purine metabolism; GMP biosynthesis; GMP from XMP (L-Gln route): step 1/1. Catalyzes the synthesis of GMP from XMP. The chain is GMP synthase [glutamine-hydrolyzing] from Flavobacterium psychrophilum (strain ATCC 49511 / DSM 21280 / CIP 103535 / JIP02/86).